The chain runs to 935 residues: Progesterone receptor (935 aa).

Residues 1-50 (MTELKAKGPRAPHVAGSPSSPKVGSPLPCSQAAGPFPGSQTSDTLPEASA) are disordered. The tract at residues 1 to 164 (MTELKAKGPR…PATQRVLSPL (164 aa)) is AF3; mediates transcriptional activation. The interval 1-568 (MTELKAKGPR…YSFESLPQKI (568 aa)) is modulating, Pro-Rich. Ser20 carries the post-translational modification Phosphoserine. Positions 55–59 (LDGLL) match the LXXL motif 1 motif. A disordered region spans residues 62–159 (RICQGQDPTD…DPPAAPATQR (98 aa)). Ser81 carries the post-translational modification Phosphoserine. Residues 115–119 (LDTLW) carry the LXXL motif 2 motif. Phosphoserine is present on residues Ser130 and Ser162. A mediates transcriptional transrepression region spans residues 165–305 (MSRSGGKAGD…LATTVTDFIH (141 aa)). The short motif at 183–187 (KVLPR) is the Nuclear localization signal element. The disordered stretch occupies residues 185-252 (LPRGLSPSRQ…ALGGAAAGGG (68 aa)). Ser190 is modified (phosphoserine). Residues 191–203 (PSRQLLLPTSGSP) are compositionally biased toward polar residues. Ser213 is subject to Phosphoserine. Residues 220–231 (EVEEEDGSESED) are compositionally biased toward acidic residues. The segment covering 232–246 (SAGPLLKGKPRALGG) has biased composition (low complexity). Ser294 carries the phosphoserine; by MAPK1 modification. The segment at 331-365 (GGAGAASAFAPPRSSPSASSTPVPGGDFPDCAYAP) is disordered. Residues 335-356 (AASAFAPPRSSPSASSTPVPGG) are compositionally biased toward low complexity. Position 345 is a phosphoserine; by MAPK (Ser345). Residue Lys388 forms a Glycyl lysine isopeptide (Lys-Gly) (interchain with G-Cter in SUMO); alternate linkage. Residue Lys388 forms a Glycyl lysine isopeptide (Lys-Gly) (interchain with G-Cter in ubiquitin); alternate linkage. Ser400 is modified (phosphoserine; by CDK2). The interval 415 to 452 (PDFPLGPPPSLPPRAPPPRPGEAAVTAAPASASVSSAS) is disordered. Pro residues predominate over residues 418 to 434 (PLGPPPSLPPRAPPPRP). Over residues 435–452 (GEAAVTAAPASASVSSAS) the composition is skewed to low complexity. The interval 456 to 548 (STLECILYKA…VYPPYLNYLR (93 aa)) is AF1; mediates transcriptional activation. Residue Lys533 forms a Glycyl lysine isopeptide (Lys-Gly) (interchain with G-Cter in SUMO) linkage. NR C4-type zinc fingers lie at residues 569-589 (CLIC…CGSC) and 605-629 (CAGR…LRKC). The nuclear receptor DNA-binding region spans 569–641 (CLICGDEASG…AGMVLGGRKF (73 aa)). Ser678 is modified (phosphoserine). Positions 681-915 (QDIQLIPPLI…EFPEMMSEVI (235 aa)) constitute an NR LBD domain. The segment at 689 to 935 (LINLLLSIEP…MVKPLLFHKK (247 aa)) is AF2; mediates transcriptional activation.

Belongs to the nuclear hormone receptor family. As to quaternary structure, interacts with SMARD1 and UNC45A. Interacts with CUEDC2; the interaction promotes ubiquitination, decreases sumoylation, and represses transcriptional activity. Interacts with PIAS3; the interaction promotes sumoylation of PR in a hormone-dependent manner, inhibits DNA-binding, and alters nuclear export. Interacts with SP1; the interaction requires ligand-induced phosphorylation on Ser-344 by ERK1/2-MAPK. Interacts with PRMT2. Interacts with NCOA2 and NCOA1. Interacts with KLF9. Interacts with GTF2B. Post-translationally, phosphorylated on multiple serine sites. Several of these sites are hormone-dependent. Phosphorylation on Ser-294 is highly hormone-dependent and modulates ubiquitination and sumoylation on Lys-388. Phosphorylation on Ser-345 requires induction by hormone. Basal phosphorylation on Ser-81, Ser-162, Ser-190 and Ser-400 is increased in response to progesterone and can be phosphorylated in vitro by the CDK2-A1 complex. Increased levels of phosphorylation on Ser-400 also in the presence of EGF, heregulin, IGF, PMA and FBS. Phosphorylation at this site by CDK2 is ligand-independent, and increases nuclear translocation and transcriptional activity. Phosphorylation at Ser-162 and Ser-294, but not at Ser-190, is impaired during the G(2)/M phase of the cell cycle. Phosphorylation on Ser-345 by ERK1/2 MAPK is required for interaction with SP1. In terms of processing, sumoylation is hormone-dependent and represses transcriptional activity. Sumoylation on all three sites is enhanced by PIAS3. Desumoylated by SENP1. Sumoylation on Lys-388, the main site of sumoylation, is repressed by ubiquitination on the same site, and modulated by phosphorylation at Ser-294. Ubiquitination is hormone-dependent and represses sumoylation on the same site. Promoted by MAPK-mediated phosphorylation on Ser-294. Post-translationally, palmitoylated by ZDHHC7 and ZDHHC21. Palmitoylation is required for plasma membrane targeting and for rapid intracellular signaling via ERK and AKT kinases and cAMP generation.

The protein localises to the nucleus. It localises to the cytoplasm. Functionally, the steroid hormones and their receptors are involved in the regulation of eukaryotic gene expression and affect cellular proliferation and differentiation in target tissues. Transcriptional activator of several progesteron-dependent promoters in a variety of cell types. Involved in activation of SRC-dependent MAPK signaling on hormone stimulation. The sequence is that of Progesterone receptor (PGR) from Pithecia irrorata (Gray monk saki).